A 135-amino-acid polypeptide reads, in one-letter code: uncharacterized protein (135 aa).

In terms of domain architecture, HotDog ACOT-type spans proline 8 to threonine 123.

It belongs to the acyl coenzyme A hydrolase family.

This is an uncharacterized protein from Buchnera aphidicola subsp. Acyrthosiphon pisum (strain APS) (Acyrthosiphon pisum symbiotic bacterium).